The following is a 248-amino-acid chain: Caffeoyl-CoA O-methyltransferase 3 (248 aa).

A substrate-binding site is contributed by Lys22. Residues Thr64, Glu86, 88 to 89, Ser94, Asp112, and Ala141 contribute to the S-adenosyl-L-methionine site; that span reads GV. A substrate-binding site is contributed by Asp164. Asp164 provides a ligand contact to a divalent metal cation. Asp166 lines the S-adenosyl-L-methionine pocket. A divalent metal cation contacts are provided by Asp190 and Asn191. Position 195 (Asn195) interacts with substrate.

It belongs to the class I-like SAM-binding methyltransferase superfamily. Cation-dependent O-methyltransferase family. CCoAMT subfamily. Requires a divalent metal cation as cofactor. In terms of tissue distribution, mostly expressed in petal limbs and tubes, and, at low levels, in stems, roots and leaves.

Its subcellular location is the cytoplasm. It localises to the cytosol. It carries out the reaction (E)-caffeoyl-CoA + S-adenosyl-L-methionine = (E)-feruloyl-CoA + S-adenosyl-L-homocysteine + H(+). The catalysed reaction is (E)-5-hydroxyferuloyl-CoA + S-adenosyl-L-methionine = (E)-sinapoyl-CoA + S-adenosyl-L-homocysteine + H(+). The protein operates within aromatic compound metabolism; phenylpropanoid biosynthesis. Functionally, involved in the production of floral volatile phenylpropanoids in flowers of fragrant cultivars (e.g. cv. Mitchell and cv. V26) from cinnamic acid, a common precursor with the anthocyanin biosynthesis pathway involved in flower pigmentation. Methylates caffeoyl-CoA to feruloyl-CoA, also able to methylate 5-hydroxyferuloyl-CoA. This is Caffeoyl-CoA O-methyltransferase 3 from Petunia hybrida (Petunia).